Consider the following 314-residue polypeptide: Olfactory receptor 9A4 (314 aa).

At 1-24 the chain is on the extracellular side; it reads MLMNYSSATEFYLLGFPGSEELHH. Asn-4 carries N-linked (GlcNAc...) asparagine glycosylation. Residues 25–45 form a helical membrane-spanning segment; it reads ILFAIFFFFYLVTLMGNTVII. Topologically, residues 46–53 are cytoplasmic; sequence MIVCVDKR. The helical transmembrane segment at 54-74 threads the bilayer; the sequence is LQSPMYFFLGHLSALEILVTT. The Extracellular portion of the chain corresponds to 75-99; the sequence is IIVPVMLWGLLLPGMQTIYLSACVV. The cysteines at positions 97 and 189 are disulfide-linked. Residues 100-120 traverse the membrane as a helical segment; it reads QLFLYLAVGTTEFALLGAMAV. At 121-139 the chain is on the cytoplasmic side; it reads DRYVAVCNPLRYNIIMNRH. The helical transmembrane segment at 140 to 160 threads the bilayer; the sequence is TCNFVVLVSWVFGFLFQIWPV. Topologically, residues 161–197 are extracellular; that stretch reads YVMFQLTYCKSNVVNNFFCDRGQLLKLSCNNTLFTEF. The N-linked (GlcNAc...) asparagine glycan is linked to Asn-190. Residues 198–217 traverse the membrane as a helical segment; sequence ILFLMAVFVLFGSLIPTIVS. Residues 218-237 are Cytoplasmic-facing; it reads NAYIISTILKIPSSSGRRKS. Residues 238–258 traverse the membrane as a helical segment; it reads FSTCASHFTCVVIGYGSCLFL. Residues 259-271 are Extracellular-facing; that stretch reads YVKPKQTQAADYN. A helical membrane pass occupies residues 272–292; the sequence is WVVSLMVSVVTPFLNPFIFTL. Over 293-314 the chain is Cytoplasmic; it reads RNDKVIEALRDGVKRCCQLFRN.

The protein belongs to the G-protein coupled receptor 1 family.

It localises to the cell membrane. Its function is as follows. Odorant receptor. The sequence is that of Olfactory receptor 9A4 (OR9A4) from Homo sapiens (Human).